A 534-amino-acid polypeptide reads, in one-letter code: uncharacterized protein (534 aa).

3 disordered regions span residues 1 to 150, 252 to 284, and 383 to 434; these read MSDS…DIPP, RRFRRREDNERNNSNSPRNFSTHGNGNGENGQP, and WKSQ…PSLP. Residues 8-67 show a composition bias toward basic and acidic residues; sequence SQREDNYSRDRRSRFTEDSYSRRDSQRSGNEAPRESRYYRKEEHLQERSRSRSPARDSRW. Residues 102–113 are compositionally biased toward polar residues; the sequence is SLQSTKATSSRT. A compositionally biased stretch (pro residues) spans 130–141; the sequence is PSAPAPPLPPSS. Residues 252–262 show a composition bias toward basic and acidic residues; it reads RRFRRREDNER. Over residues 263-272 the composition is skewed to low complexity; it reads NNSNSPRNFS. Positions 393–408 are enriched in polar residues; it reads NQGNRAYNPPNRNQAF.

This is an uncharacterized protein from Schizosaccharomyces pombe (strain 972 / ATCC 24843) (Fission yeast).